The primary structure comprises 184 residues: Inosine triphosphate pyrophosphatase (184 aa).

Residue 9-14 (TSNASK) coordinates ITP. E38 contributes to the Mg(2+) binding site. Residues K50, 66 to 67 (DT), K83, 142 to 145 (FGWD), K163, and 168 to 169 (HR) each bind ITP.

This sequence belongs to the HAM1 NTPase family. As to quaternary structure, homodimer. Requires Mg(2+) as cofactor. Mn(2+) serves as cofactor.

The protein resides in the cytoplasm. The protein localises to the nucleus. It carries out the reaction ITP + H2O = IMP + diphosphate + H(+). The enzyme catalyses dITP + H2O = dIMP + diphosphate + H(+). The catalysed reaction is XTP + H2O = XMP + diphosphate + H(+). Functionally, pyrophosphatase that hydrolyzes non-canonical purine nucleotides such as inosine triphosphate (ITP), deoxyinosine triphosphate (dITP) or xanthosine 5'-triphosphate (XTP) to their respective monophosphate derivatives. The enzyme does not distinguish between the deoxy- and ribose forms. Probably excludes non-canonical purines from RNA and DNA precursor pools, thus preventing their incorporation into RNA and DNA and avoiding chromosomal lesions. This is Inosine triphosphate pyrophosphatase from Tuber melanosporum (strain Mel28) (Perigord black truffle).